Here is a 349-residue protein sequence, read N- to C-terminus: GTP 3',8-cyclase (349 aa).

The 220-residue stretch at 26-245 (GFGRAVTYLR…SSFWTLTDIP (220 aa)) folds into the Radical SAM core domain. Arg-35 lines the GTP pocket. Positions 42 and 46 each coordinate [4Fe-4S] cluster. Tyr-48 provides a ligand contact to S-adenosyl-L-methionine. Cys-49 provides a ligand contact to [4Fe-4S] cluster. Residue Arg-84 participates in GTP binding. Gly-88 contributes to the S-adenosyl-L-methionine binding site. Thr-118 is a binding site for GTP. Ser-142 lines the S-adenosyl-L-methionine pocket. Lys-178 is a binding site for GTP. Residue Met-212 participates in S-adenosyl-L-methionine binding. The [4Fe-4S] cluster site is built by Cys-275 and Cys-278. 280–282 (RVR) lines the GTP pocket. Residue Cys-292 participates in [4Fe-4S] cluster binding.

The protein belongs to the radical SAM superfamily. MoaA family. In terms of assembly, monomer and homodimer. The cofactor is [4Fe-4S] cluster.

The enzyme catalyses GTP + AH2 + S-adenosyl-L-methionine = (8S)-3',8-cyclo-7,8-dihydroguanosine 5'-triphosphate + 5'-deoxyadenosine + L-methionine + A + H(+). Its pathway is cofactor biosynthesis; molybdopterin biosynthesis. Functionally, catalyzes the cyclization of GTP to (8S)-3',8-cyclo-7,8-dihydroguanosine 5'-triphosphate. This Caulobacter vibrioides (strain ATCC 19089 / CIP 103742 / CB 15) (Caulobacter crescentus) protein is GTP 3',8-cyclase.